The chain runs to 483 residues: Teichuronic acid biosynthesis protein TuaB (483 aa).

Helical transmembrane passes span 15 to 34 (TSIS…ALLG), 41 to 63 (EFGL…DMGF), 83 to 105 (WLNI…VIAG), 112 to 134 (LVFL…QYQY), 154 to 176 (VLSF…YVIS), 294 to 316 (LALV…ITAV), 321 to 343 (WLAA…LMNP), 356 to 378 (LAFY…AVQT), 382 to 404 (LTVA…WLLA), 411 to 433 (LSAY…IIAF), and 448 to 470 (MRLA…KAYP).

Belongs to the polysaccharide synthase family.

The protein resides in the cell membrane. The protein operates within cell wall biogenesis; teichuronic acid biosynthesis. Functionally, might be involved in the translocation of teichuronic acid repeating units from the inner to the outer surface of the membrane. This chain is Teichuronic acid biosynthesis protein TuaB (tuaB), found in Bacillus subtilis (strain 168).